Reading from the N-terminus, the 706-residue chain is Parasporal crystal protein Cry18Aa (706 aa).

The protein belongs to the delta endotoxin family.

Its function is as follows. Binds to the brush border membrane vesicles of scarab larvae and somehow damages the gut wall to allow the vegetative cells of P.popilliae to enter the hemolymph. Active on M.melolontha. The polypeptide is Parasporal crystal protein Cry18Aa (cry18Aa) (Paenibacillus popilliae (Bacillus popilliae)).